We begin with the raw amino-acid sequence, 236 residues long: Mitochondrial inner membrane protease ATP23 (236 aa).

H136 contributes to the a divalent metal cation binding site. E137 is a catalytic residue. Residue H140 coordinates a divalent metal cation.

It belongs to the peptidase M76 family.

The protein resides in the mitochondrion inner membrane. In terms of biological role, has a dual role in the assembly of mitochondrial ATPase. Acts as a protease that removes N-terminal residues of mitochondrial ATPase CF(0) subunit 6 at the intermembrane space side. Also involved in the correct assembly of the membrane-embedded ATPase CF(0) particle, probably mediating association of subunit 6 with the subunit 9 ring. This chain is Mitochondrial inner membrane protease ATP23 (ATP23), found in Debaryomyces hansenii (strain ATCC 36239 / CBS 767 / BCRC 21394 / JCM 1990 / NBRC 0083 / IGC 2968) (Yeast).